We begin with the raw amino-acid sequence, 57 residues long: Large ribosomal subunit protein bL32 (57 aa).

The segment covering 1–19 (MATPKRRMSRANTRSRRAQ) has biased composition (basic residues). The disordered stretch occupies residues 1-20 (MATPKRRMSRANTRSRRAQW).

This sequence belongs to the bacterial ribosomal protein bL32 family.

The sequence is that of Large ribosomal subunit protein bL32 from Mycobacterium leprae (strain Br4923).